A 338-amino-acid polypeptide reads, in one-letter code: Cap-specific mRNA (nucleoside-2'-O-)-methyltransferase (338 aa).

Position 22 (Y22) interacts with mRNA. S-adenosyl-L-methionine is bound by residues Q39, Y66, G68, G72, D95, R97, V116, and D138. The segment at 169–249 (PAASSLKWRC…NKIIRNRIII (81 aa)) is binding to NPH-I. Residues 169–333 (PAASSLKWRC…NTKKSVRGNK (165 aa)) form a binding to Rap94 region. Catalysis depends on K175, which acts as the For methyltransferase activity. Residues 177–180 (RCPF), D182, 205–207 (SAE), and E233 each bind mRNA. Residues 305-338 (HHEPTQRKVPSKNTMLKSRNTKKSVRGNKQGRRT) form a disordered region. The span at 323-338 (RNTKKSVRGNKQGRRT) shows a compositional bias: basic residues.

Belongs to the class I-like SAM-binding methyltransferase superfamily. Poxvirus/kinetoplastid 2'-O-MTase family. As to quaternary structure, interacts with poly(A) polymerase catalytic subunit OPG063. Interacts with OPG109 and OPG123; these interactions might help linking transcription to capping and polyadenylation.

It is found in the virion. The enzyme catalyses a 5'-end (N(7)-methyl 5'-triphosphoguanosine)-ribonucleoside in mRNA + S-adenosyl-L-methionine = a 5'-end (N(7)-methyl 5'-triphosphoguanosine)-(2'-O-methyl-ribonucleoside) in mRNA + S-adenosyl-L-homocysteine + H(+). In terms of biological role, displays methyltransferase, positive regulation of the poly(A) polymerase and transcription elongation activities. Involved in the modification of both mRNA ends and in intermediate and late gene positive transcription elongation. At the mRNAs 5' end, methylates the ribose 2' OH group of the first transcribed nucleotide, thereby producing a 2'-O-methylpurine cap. At the 3' end, functions as a processivity factor which stimulates the activity of the viral poly(A) polymerase OPG063 that creates mRNA's poly(A) tail. In the presence of OPG102, OPG063 does not dissociate from the RNA allowing tail elongation to around 250 adenylates. The protein is Cap-specific mRNA (nucleoside-2'-O-)-methyltransferase (OPG102) of Oryctolagus cuniculus (Rabbit).